The sequence spans 162 residues: Phosphopantetheine adenylyltransferase (162 aa).

Serine 9 is a substrate binding site. Residues 9 to 10 (SF) and histidine 17 contribute to the ATP site. Residues lysine 41, leucine 73, and lysine 87 each contribute to the substrate site. ATP contacts are provided by residues 88–90 (GLR), glutamate 98, and 123–129 (YAHLSSS).

The protein belongs to the bacterial CoaD family. In terms of assembly, homohexamer. It depends on Mg(2+) as a cofactor.

The protein localises to the cytoplasm. It carries out the reaction (R)-4'-phosphopantetheine + ATP + H(+) = 3'-dephospho-CoA + diphosphate. It participates in cofactor biosynthesis; coenzyme A biosynthesis; CoA from (R)-pantothenate: step 4/5. Functionally, reversibly transfers an adenylyl group from ATP to 4'-phosphopantetheine, yielding dephospho-CoA (dPCoA) and pyrophosphate. This Symbiobacterium thermophilum (strain DSM 24528 / JCM 14929 / IAM 14863 / T) protein is Phosphopantetheine adenylyltransferase.